The sequence spans 127 residues: Secreted RxLR effector protein 7 (127 aa).

The signal sequence occupies residues Met1 to Ala21. The RxLR-dEER signature appears at Arg48–Arg65.

It belongs to the RxLR effector family.

It is found in the secreted. It localises to the host nucleus. The protein resides in the host cytoplasm. Its function is as follows. Secreted effector that completely suppresses the host cell death induced by cell death-inducing proteins. This chain is Secreted RxLR effector protein 7, found in Plasmopara viticola (Downy mildew of grapevine).